Reading from the N-terminus, the 483-residue chain is V-type proton ATPase subunit H (483 aa).

Ser-483 is subject to Phosphoserine.

Belongs to the V-ATPase H subunit family. V-ATPase is a heteromultimeric enzyme made up of two complexes: the ATP-hydrolytic V1 complex and the proton translocation V0 complex. The V1 complex consists of three catalytic AB heterodimers that form a heterohexamer, three peripheral stalks each consisting of EG heterodimers, one central rotor including subunits D and F, and the regulatory subunits C and H. The proton translocation complex V0 consists of the proton transport subunit a, a ring of proteolipid subunits c9c'', rotary subunit d, subunits e and f, and the accessory subunits ATP6AP1/Ac45 and ATP6AP2/PRR. Interacts with AP2M1.

Its subcellular location is the cytoplasmic vesicle. It localises to the clathrin-coated vesicle membrane. Subunit of the V1 complex of vacuolar(H+)-ATPase (V-ATPase), a multisubunit enzyme composed of a peripheral complex (V1) that hydrolyzes ATP and a membrane integral complex (V0) that translocates protons. V-ATPase is responsible for acidifying and maintaining the pH of intracellular compartments and in some cell types, is targeted to the plasma membrane, where it is responsible for acidifying the extracellular environment. Subunit H is essential for V-ATPase activity, but not for the assembly of the complex. Involved in the endocytosis mediated by clathrin-coated pits, required for the formation of endosomes. The sequence is that of V-type proton ATPase subunit H (ATP6V1H) from Sus scrofa (Pig).